The following is a 241-amino-acid chain: Sugar fermentation stimulation protein homolog (241 aa).

The protein belongs to the SfsA family.

The chain is Sugar fermentation stimulation protein homolog from Hahella chejuensis (strain KCTC 2396).